The primary structure comprises 99 residues: DNA-directed RNA polymerase subunit omega (99 aa).

Belongs to the RNA polymerase subunit omega family. In terms of assembly, the RNAP catalytic core consists of 2 alpha, 1 beta, 1 beta' and 1 omega subunit. When a sigma factor is associated with the core the holoenzyme is formed, which can initiate transcription.

The catalysed reaction is RNA(n) + a ribonucleoside 5'-triphosphate = RNA(n+1) + diphosphate. Promotes RNA polymerase assembly. Latches the N- and C-terminal regions of the beta' subunit thereby facilitating its interaction with the beta and alpha subunits. The chain is DNA-directed RNA polymerase subunit omega from Xylella fastidiosa (strain Temecula1 / ATCC 700964).